The primary structure comprises 341 residues: MTTQQPVAVLGGGSFGTAIANLLAENGHQVRQWMRDPEQAEAIRVNRENPRYLKGIKVRPEVEPVTDLTAALEVSELIFVALPSSALRSVLSPHIERLSGKMLVSLTKGIEAQSFKLMSQILEEIVPQARIGVLSGPNLAREIAEHALTATVVASEDEDLCQQVQAALHGRTFRVYASNDRFGVELGGALKNVYAIIAGMAVALDMGENTKSMLITRALAEMTRFAVSQGANPMTFLGLAGVGDLIVTCSSPKSRNYQVGFALGQGLSLEEAVTRLGEVAEGVNTLKVLKVKAQEVQVYMPLVAGLHAILFEGRTLSQVIEALMRAEPKTDVDFISITGFN.

NADPH-binding residues include S14, F15, R35, and K108. Sn-glycerol 3-phosphate contacts are provided by K108 and G136. A140 contributes to the NADPH binding site. Sn-glycerol 3-phosphate contacts are provided by K191, D244, S254, R255, and N256. Catalysis depends on K191, which acts as the Proton acceptor. R255 lines the NADPH pocket. NADPH-binding residues include V279 and E281.

This sequence belongs to the NAD-dependent glycerol-3-phosphate dehydrogenase family.

Its subcellular location is the cytoplasm. The enzyme catalyses sn-glycerol 3-phosphate + NAD(+) = dihydroxyacetone phosphate + NADH + H(+). It carries out the reaction sn-glycerol 3-phosphate + NADP(+) = dihydroxyacetone phosphate + NADPH + H(+). Its pathway is membrane lipid metabolism; glycerophospholipid metabolism. Its function is as follows. Catalyzes the reduction of the glycolytic intermediate dihydroxyacetone phosphate (DHAP) to sn-glycerol 3-phosphate (G3P), the key precursor for phospholipid synthesis. This Pseudomonas syringae pv. tomato (strain ATCC BAA-871 / DC3000) protein is Glycerol-3-phosphate dehydrogenase [NAD(P)+].